A 556-amino-acid chain; its full sequence is Undecaprenyl phosphate-alpha-4-amino-4-deoxy-L-arabinose arabinosyl transferase (556 aa).

11 helical membrane passes run methionine 5–leucine 25, phenylalanine 88–leucine 108, leucine 116–valine 136, phenylalanine 179–leucine 199, leucine 207–leucine 227, alanine 258–leucine 278, phenylalanine 296–leucine 316, tyrosine 319–alanine 339, leucine 355–proline 375, leucine 384–leucine 404, and tryptophan 410–proline 430.

It belongs to the glycosyltransferase 83 family.

The protein resides in the cell inner membrane. The enzyme catalyses 4-amino-4-deoxy-alpha-L-arabinopyranosyl di-trans,octa-cis-undecaprenyl phosphate + lipid IVA = lipid IIA + di-trans,octa-cis-undecaprenyl phosphate.. It participates in lipopolysaccharide metabolism; 4-amino-4-deoxy-beta-L-arabinose-lipid A biosynthesis. Its function is as follows. Catalyzes the transfer of the L-Ara4N moiety of the glycolipid undecaprenyl phosphate-alpha-L-Ara4N to lipid A. The modified arabinose is attached to lipid A and is required for resistance to polymyxin and cationic antimicrobial peptides. The chain is Undecaprenyl phosphate-alpha-4-amino-4-deoxy-L-arabinose arabinosyl transferase from Pectobacterium carotovorum subsp. carotovorum (strain PC1).